The sequence spans 462 residues: Myrosinase-binding protein 1 (462 aa).

Residues 1-23 are disordered; sequence MSTGGPQKLEAQGGKEGKEWDDG. 3 Jacalin-type lectin domains span residues 6-148, 157-300, and 310-453; these read PQKL…YFAP, PNKV…YFAP, and TKKL…HIVP. Residues 13-23 are compositionally biased toward basic and acidic residues; the sequence is GGKEGKEWDDG.

Belongs to the jacalin lectin family. As to expression, expressed exclusively in flowers, in male and female organs, petals and pedicels. Not detected in pollen grains or sepals.

The chain is Myrosinase-binding protein 1 (MBP1) from Arabidopsis thaliana (Mouse-ear cress).